The sequence spans 86 residues: Kappa-theraphotoxin-Cg1a 5 (86 aa).

Residues 1–21 (MKVSVLITLAVLGVMFVWTSA) form the signal peptide. The propeptide occupies 22–50 (AELEERGSDQRDSPAWLKSMERIFQSEER). Cystine bridges form between Cys-52–Cys-66, Cys-59–Cys-71, and Cys-65–Cys-78. Phenylalanine amide is present on Phe-84.

Belongs to the neurotoxin 10 (Hwtx-1) family. 28 (Jztx-11) subfamily. In terms of tissue distribution, expressed by the venom gland.

It localises to the secreted. Its function is as follows. This toxin acts as a voltage-dependent gating-modifier. It inhibits the sodium conductance (IC(50)=124 nM) and slows the fast inactivation (EC(50)=1180 nM) of Nav1.5/SCN5A. It significantly shifts the activation to more depolarized voltages and decreases the deactivation of Nav1.5 currents upon extreme depolarization, but only slightly affects voltage-dependence of steady-state inactivation. In addition, this toxin causes an approximately five-fold decrease in the rate of recovery from inactivation and an approximately 1.9-fold reduction in the closed-state inactivation rate. This toxin integrates the functions of site 3 toxins (alpha-scorpion toxins) with site 4 toxins (beta-scorpion and spider toxins) by targeting multiple sites on Nav1.5. Also shows inhibition of voltage-gated potassium channels (5 uM completely inhibits Kv2.1/KCNB1, whereas 5 uM moderately inhibits Kv4.2/KCND2 Kv4.1/KCND1 channels). In Chilobrachys guangxiensis (Chinese earth tiger tarantula), this protein is Kappa-theraphotoxin-Cg1a 5.